Reading from the N-terminus, the 354-residue chain is Phosphoribosylformylglycinamidine cyclo-ligase (354 aa).

This sequence belongs to the AIR synthase family.

The protein localises to the cytoplasm. It carries out the reaction 2-formamido-N(1)-(5-O-phospho-beta-D-ribosyl)acetamidine + ATP = 5-amino-1-(5-phospho-beta-D-ribosyl)imidazole + ADP + phosphate + H(+). It functions in the pathway purine metabolism; IMP biosynthesis via de novo pathway; 5-amino-1-(5-phospho-D-ribosyl)imidazole from N(2)-formyl-N(1)-(5-phospho-D-ribosyl)glycinamide: step 2/2. This Synechococcus sp. (strain JA-2-3B'a(2-13)) (Cyanobacteria bacterium Yellowstone B-Prime) protein is Phosphoribosylformylglycinamidine cyclo-ligase.